We begin with the raw amino-acid sequence, 397 residues long: MEKVFIKALPVLRILIEAGHQAYFVGGAVRDSYMKRTIGDVDIATDAAPDQVERLFQRTVDVGKEHGTIIVLWEDETYEVTTFRTESDYVDFRRPSEVQFISSLEEDLKRRDLTINAMAMTADGKVLDYFGGKKDIDQKVIRTVGKPEDRFQEDALRMLRAVRFMSQLGFTLSPETEEAIAKEKSLLSHVSVERKTIEFEKLLQGRASRQALQTLIQTRLYEELPGFYHKRENLISTSEFPFFSLTSREELWAALLINLGIVLKDAPLFLKAWKLPGKVIKEAIHIADTFGQSLDAMTMYRAGKKALLSAAKISQLRQNEKLDEKKLKDIQYAYQNLPIKSLKDLDITGKDLLALRNRPAGKWVSEELQWIEQAVVTGKLSNQKKHIEEWLKTCGQH.

ATP-binding residues include glycine 27 and arginine 30. Positions 27 and 30 each coordinate CTP. Residues aspartate 40 and aspartate 42 each coordinate Mg(2+). Residues arginine 111, aspartate 154, arginine 157, arginine 160, and arginine 163 each contribute to the ATP site. Arginine 111, aspartate 154, arginine 157, arginine 160, and arginine 163 together coordinate CTP.

Belongs to the tRNA nucleotidyltransferase/poly(A) polymerase family. Bacterial CCA-adding enzyme type 3 subfamily. Homodimer. Requires Mg(2+) as cofactor.

It carries out the reaction a tRNA precursor + 2 CTP + ATP = a tRNA with a 3' CCA end + 3 diphosphate. The enzyme catalyses a tRNA with a 3' CCA end + 2 CTP + ATP = a tRNA with a 3' CCACCA end + 3 diphosphate. In terms of biological role, catalyzes the addition and repair of the essential 3'-terminal CCA sequence in tRNAs without using a nucleic acid template. Adds these three nucleotides in the order of C, C, and A to the tRNA nucleotide-73, using CTP and ATP as substrates and producing inorganic pyrophosphate. Has no poly(A) polymerase activity. In Bacillus subtilis (strain 168), this protein is CCA-adding enzyme.